The sequence spans 427 residues: Tryptophan synthase beta chain 1 (427 aa).

Lys-107 carries the post-translational modification N6-(pyridoxal phosphate)lysine.

This sequence belongs to the TrpB family. In terms of assembly, tetramer of two alpha and two beta chains. The cofactor is pyridoxal 5'-phosphate.

It catalyses the reaction (1S,2R)-1-C-(indol-3-yl)glycerol 3-phosphate + L-serine = D-glyceraldehyde 3-phosphate + L-tryptophan + H2O. The protein operates within amino-acid biosynthesis; L-tryptophan biosynthesis; L-tryptophan from chorismate: step 5/5. Its function is as follows. The beta subunit is responsible for the synthesis of L-tryptophan from indole and L-serine. This is Tryptophan synthase beta chain 1 (trpB1) from Aeropyrum pernix (strain ATCC 700893 / DSM 11879 / JCM 9820 / NBRC 100138 / K1).